We begin with the raw amino-acid sequence, 228 residues long: Large ribosomal subunit protein uL4 (228 aa).

2 disordered regions span residues G45–T102 and P208–Q228. Residues P208–G221 show a composition bias toward low complexity.

It belongs to the universal ribosomal protein uL4 family. Part of the 50S ribosomal subunit.

One of the primary rRNA binding proteins, this protein initially binds near the 5'-end of the 23S rRNA. It is important during the early stages of 50S assembly. It makes multiple contacts with different domains of the 23S rRNA in the assembled 50S subunit and ribosome. Functionally, forms part of the polypeptide exit tunnel. The sequence is that of Large ribosomal subunit protein uL4 from Saccharopolyspora erythraea (strain ATCC 11635 / DSM 40517 / JCM 4748 / NBRC 13426 / NCIMB 8594 / NRRL 2338).